A 1334-amino-acid chain; its full sequence is MPSHSKNKKRKSKSKGGSTVKKSGGLLEKGIGNITAELYNDTDDYPTSRVIKRAPNGDVIVESLPTKPKKSKSRQTNSSSNNDMILDLDSHWEWLSPEEKKNILRIDKDEVFEMLSRYNNHNSNNVNGNTNNNNIIGTGSNNLSGGISTNSNNNTSSSCNCNVCGRRHMAMDQEMERIYNRLYEMQRENYEDMTHIKFHLNIIKDLQKRKTQMISPPASPEMDSNNVDEAREPNSGSSNESLDIKNDLETMRDEVVKYFLSPNSVDTLKKEVLNFKHNKQKQFQTPISLNEDNTEEVVEDNEAQHIYDDLSNEIHDSGLIESPRTVEDDANIIDIESKSRYLNFAKTFISSHPTIAQEYVNKMIMYPEMKELTDDLMNNNGSGFIKAIEEFVLDKQKQNTLPDTEIDINDVNSQQHENPEEALQVQDLGDAKEFTTMLHNGQPLTSDEYANLQRHIAERVTDAYNTETKEFEGISQLEKELFTRFMHGSDRRQFGDSILQLFKNKYDDKLSANSISTSLAAAASTITHDIISPRNDDGNDTEEDIDYYDDEDDVSSENIHHRNDLDDDFKSREEYSDYNSDFHDNRKCEKYNDFDDDDDYLDNNRNLECAHAEHNHETLSTYHHDVDLADSNSHGYKNYASHHTSSQVSEDYIDDIDDDGYESGIDENERLEEGRKLLQITITKILQRRIMESYHAKQAENNRMKLLEELEAEESKKKEKEEKKQRKREKEKEKKRLLQVAKEEERKKKEEEAERLKKEAEEREMERRETQRKKVEAAKKKKDEEKKRKLEEQRKREEEQERQRKIKEEQKRKKDEERKQKELEKKKKDEEKRIQEEEKRKKEEEAEQKTLNEKKRLDVEIMEQKRLEEEEKRLKSTASTSNVPYAELLKMTPSLQPVSGNINDELFGMINAATSSQSIPTSSSHLNHLLQQNDASHFNMTPRHDLLNPSGGMHFGPSDLIEQSHFTHKSNSFDTLAAINDPTTPQTTLPYGNSSVPPNSFDISSWGNFNGSSTAETQLQSQLPQQSLLGSHSVTSDQNRKSFNEELNTITNLLSTTGLEDQLSQKDSFAHSSLWGSQGTSLSGSNPNLSSNFAPAGLPINQTPISPGNIGIPTTTHRSSIWDISSGVDYSLNDNKITGSIQSERPLSNVIPSSYMSPNIWSGGTSKIPVIEQPLVFNPNENQTNPISNIILRELSLLTLPNSTDQYVSSELLCQKVMANRIDYGVYFTELMNLRNAHKIEIASNDNGQVTHVKLVYKSKDELEMPLNSSENQNSHIQMQQNYGLQPISSTTAGNTASTTANNANGSTINTSNSHFFNINKTISNPSVTANIWS.

Positions 1–14 are enriched in basic residues; the sequence is MPSHSKNKKRKSKS. 5 disordered regions span residues 1-82, 212-242, 530-565, 712-849, and 977-996; these read MPSH…SSNN, QMISPPASPEMDSNNVDEAREPNSGSSNESL, IISPRNDDGNDTEEDIDYYDDEDDVSSENIHHRNDL, AEES…AEQK, and AAINDPTTPQTTLPYGNSSV. The segment covering 15–25 has biased composition (low complexity); that stretch reads KGGSTVKKSGG. The segment covering 538–555 has biased composition (acidic residues); the sequence is GNDTEEDIDYYDDEDDVS. Residues 694-876 adopt a coiled-coil conformation; it reads YHAKQAENNR…LEEEEKRLKS (183 aa). A compositionally biased stretch (polar residues) spans 981–996; it reads DPTTPQTTLPYGNSSV.

Belongs to the NST1 family.

Its subcellular location is the cytoplasm. May act as a negative regulator of salt tolerance. The chain is Stress response protein NST1 (NST1) from Vanderwaltozyma polyspora (strain ATCC 22028 / DSM 70294 / BCRC 21397 / CBS 2163 / NBRC 10782 / NRRL Y-8283 / UCD 57-17) (Kluyveromyces polysporus).